The chain runs to 122 residues: Large ribosomal subunit protein uL14 (122 aa).

It belongs to the universal ribosomal protein uL14 family. In terms of assembly, part of the 50S ribosomal subunit. Forms a cluster with proteins L3 and L19. In the 70S ribosome, L14 and L19 interact and together make contacts with the 16S rRNA in bridges B5 and B8.

Functionally, binds to 23S rRNA. Forms part of two intersubunit bridges in the 70S ribosome. The protein is Large ribosomal subunit protein uL14 of Idiomarina loihiensis (strain ATCC BAA-735 / DSM 15497 / L2-TR).